The chain runs to 684 residues: Probable phosphoenolpyruvate synthase (684 aa).

Histidine 424 functions as the Tele-phosphohistidine intermediate in the catalytic mechanism. Substrate-binding residues include arginine 517, arginine 564, and glutamate 661. Glutamate 661 lines the Mg(2+) pocket.

It belongs to the PEP-utilizing enzyme family. It depends on Mg(2+) as a cofactor.

The enzyme catalyses pyruvate + ATP + H2O = phosphoenolpyruvate + AMP + phosphate + 2 H(+). The protein operates within carbohydrate biosynthesis; gluconeogenesis. Its function is as follows. Catalyzes the phosphorylation of pyruvate to phosphoenolpyruvate. The polypeptide is Probable phosphoenolpyruvate synthase (ppsA) (Methanothermobacter thermautotrophicus (strain ATCC 29096 / DSM 1053 / JCM 10044 / NBRC 100330 / Delta H) (Methanobacterium thermoautotrophicum)).